The following is a 197-amino-acid chain: Holliday junction branch migration complex subunit RuvA (197 aa).

The interval 1–64 is domain I; it reads MYEYIKGKYI…EDFIGVYGFL (64 aa). The segment at 65 to 143 is domain II; that stretch reads TKDELSMFKL…IDILEEDDEQ (79 aa). Residues 144-148 are flexible linker; it reads TINKV. Residues 149–197 form a domain III region; the sequence is TDDKKVLEAVAALITLGYSEKEANKVINSCDKNNSLEQIIKEALKYLMK.

This sequence belongs to the RuvA family. Homotetramer. Forms an RuvA(8)-RuvB(12)-Holliday junction (HJ) complex. HJ DNA is sandwiched between 2 RuvA tetramers; dsDNA enters through RuvA and exits via RuvB. An RuvB hexamer assembles on each DNA strand where it exits the tetramer. Each RuvB hexamer is contacted by two RuvA subunits (via domain III) on 2 adjacent RuvB subunits; this complex drives branch migration. In the full resolvosome a probable DNA-RuvA(4)-RuvB(12)-RuvC(2) complex forms which resolves the HJ.

The protein localises to the cytoplasm. In terms of biological role, the RuvA-RuvB-RuvC complex processes Holliday junction (HJ) DNA during genetic recombination and DNA repair, while the RuvA-RuvB complex plays an important role in the rescue of blocked DNA replication forks via replication fork reversal (RFR). RuvA specifically binds to HJ cruciform DNA, conferring on it an open structure. The RuvB hexamer acts as an ATP-dependent pump, pulling dsDNA into and through the RuvAB complex. HJ branch migration allows RuvC to scan DNA until it finds its consensus sequence, where it cleaves and resolves the cruciform DNA. This chain is Holliday junction branch migration complex subunit RuvA, found in Clostridium botulinum (strain 657 / Type Ba4).